The following is a 213-amino-acid chain: MVEETTLDLVKQLIEGSPERKFSESLDIAINLKNLDMSQPKNRVDEEIILPNGLGKTMKIAVFAKGEVGLNAKDAGCDYILTEEDIKELGEDKSKARSLANECDFFIAEVQYMAQIGKALGAILGPRGKMPVPLTPDKNVADLINSTKNSVRIRSKDKLTFHVSVGRRDMDVEKLAENIETVLGRLEHSLEKGKHNLKSVYVTTTMGNSVRLV.

This sequence belongs to the universal ribosomal protein uL1 family. In terms of assembly, part of the 50S ribosomal subunit.

Its function is as follows. Binds directly to 23S rRNA. Probably involved in E site tRNA release. In terms of biological role, protein L1 is also a translational repressor protein, it controls the translation of its operon by binding to its mRNA. This is Large ribosomal subunit protein uL1 from Methanococcoides burtonii (strain DSM 6242 / NBRC 107633 / OCM 468 / ACE-M).